Reading from the N-terminus, the 213-residue chain is FMN-dependent NADH:quinone oxidoreductase 1 (213 aa).

18-20 (SVS) contacts FMN.

The protein belongs to the azoreductase type 1 family. As to quaternary structure, homodimer. FMN is required as a cofactor.

It carries out the reaction 2 a quinone + NADH + H(+) = 2 a 1,4-benzosemiquinone + NAD(+). It catalyses the reaction N,N-dimethyl-1,4-phenylenediamine + anthranilate + 2 NAD(+) = 2-(4-dimethylaminophenyl)diazenylbenzoate + 2 NADH + 2 H(+). Functionally, quinone reductase that provides resistance to thiol-specific stress caused by electrophilic quinones. Its function is as follows. Also exhibits azoreductase activity. Catalyzes the reductive cleavage of the azo bond in aromatic azo compounds to the corresponding amines. In Bacillus cereus (strain ATCC 10987 / NRS 248), this protein is FMN-dependent NADH:quinone oxidoreductase 1.